We begin with the raw amino-acid sequence, 447 residues long: Phosphoglucosamine mutase (447 aa).

S106 acts as the Phosphoserine intermediate in catalysis. Mg(2+) is bound by residues S106, D245, D247, and D249. S106 is modified (phosphoserine).

Belongs to the phosphohexose mutase family. The cofactor is Mg(2+). In terms of processing, activated by phosphorylation.

It catalyses the reaction alpha-D-glucosamine 1-phosphate = D-glucosamine 6-phosphate. Functionally, catalyzes the conversion of glucosamine-6-phosphate to glucosamine-1-phosphate. The polypeptide is Phosphoglucosamine mutase (Cupriavidus taiwanensis (strain DSM 17343 / BCRC 17206 / CCUG 44338 / CIP 107171 / LMG 19424 / R1) (Ralstonia taiwanensis (strain LMG 19424))).